Here is a 602-residue protein sequence, read N- to C-terminus: 3-hydroxy-3-methylglutaryl-coenzyme A reductase 2 (602 aa).

Transmembrane regions (helical) follow at residues 44 to 67 (ASDALPLPLYLTTNGLFFTMFFSV) and 95 to 115 (AIVSLIASVIYLLGFFGIGFV). The linker stretch occupies residues 116 to 187 (QTFVSRGNND…PLITSASSGE (72 aa)). Asparagine 124 carries N-linked (GlcNAc...) asparagine glycosylation. Residues 188 to 602 (DEEIIKSVVQ…STKDVTKASS (415 aa)) are catalytic. Residue glutamate 281 is the Charge relay system of the active site. N-linked (GlcNAc...) asparagine glycosylation occurs at asparagine 345. The active-site Charge relay system is the lysine 413. Residue asparagine 458 is glycosylated (N-linked (GlcNAc...) asparagine). Aspartate 489 serves as the catalytic Charge relay system. Histidine 587 serves as the catalytic Proton donor. The N-linked (GlcNAc...) asparagine glycan is linked to asparagine 591.

This sequence belongs to the HMG-CoA reductase family.

The protein resides in the endoplasmic reticulum membrane. It catalyses the reaction (R)-mevalonate + 2 NADP(+) + CoA = (3S)-3-hydroxy-3-methylglutaryl-CoA + 2 NADPH + 2 H(+). It participates in metabolic intermediate biosynthesis; (R)-mevalonate biosynthesis; (R)-mevalonate from acetyl-CoA: step 3/3. In terms of biological role, catalyzes the synthesis of mevalonate. The specific precursor of all isoprenoid compounds present in plants. This chain is 3-hydroxy-3-methylglutaryl-coenzyme A reductase 2 (HMG2), found in Solanum lycopersicum (Tomato).